Here is a 273-residue protein sequence, read N- to C-terminus: MPELPEVETVRRGLEKLLLGRTILSLEVKVPKMIKTSYDSFLHDLPGQTIQAMRRRGKYLIFDFGQLIIISHLRMEGKYLLFTDQVPDNKHFHLFFKLDDGSTLVYQDVRKFGTFDLLDRKQEEAYFTRKELGPEPTKKTFKYVPFERALMHSGKSIKPLLLEQKLVAGLGNIYVDEVLWAAKVHPETPANKLSKAAMKRVHDQTIAILQLGIAKGGSTIRTYRNALGEDGTMQNYLQVYGKTGQPCPRCASMIVKIKLGGRGTHLCPHCQKR.

Pro2 functions as the Schiff-base intermediate with DNA in the catalytic mechanism. The active-site Proton donor is Glu3. The Proton donor; for beta-elimination activity role is filled by Lys58. His91 and Arg110 together coordinate DNA. The FPG-type zinc-finger motif lies at 238–272 (QVYGKTGQPCPRCASMIVKIKLGGRGTHLCPHCQK). Arg262 functions as the Proton donor; for delta-elimination activity in the catalytic mechanism.

The protein belongs to the FPG family. In terms of assembly, monomer. It depends on Zn(2+) as a cofactor.

The enzyme catalyses Hydrolysis of DNA containing ring-opened 7-methylguanine residues, releasing 2,6-diamino-4-hydroxy-5-(N-methyl)formamidopyrimidine.. It carries out the reaction 2'-deoxyribonucleotide-(2'-deoxyribose 5'-phosphate)-2'-deoxyribonucleotide-DNA = a 3'-end 2'-deoxyribonucleotide-(2,3-dehydro-2,3-deoxyribose 5'-phosphate)-DNA + a 5'-end 5'-phospho-2'-deoxyribonucleoside-DNA + H(+). Functionally, involved in base excision repair of DNA damaged by oxidation or by mutagenic agents. Acts as a DNA glycosylase that recognizes and removes damaged bases. Has a preference for oxidized purines, such as 7,8-dihydro-8-oxoguanine (8-oxoG). Has AP (apurinic/apyrimidinic) lyase activity and introduces nicks in the DNA strand. Cleaves the DNA backbone by beta-delta elimination to generate a single-strand break at the site of the removed base with both 3'- and 5'-phosphates. This chain is Formamidopyrimidine-DNA glycosylase, found in Streptococcus thermophilus (strain CNRZ 1066).